Consider the following 894-residue polypeptide: Microsomal triglyceride transfer protein large subunit (894 aa).

The signal sequence occupies residues 1 to 18 (MILLAVLFLCFISSYSAS). Residues 28–659 (LNNDRLYKLT…IFQYIGKAGL (632 aa)) form the Vitellogenin domain. A disulfide bond links C174 and C194.

As to quaternary structure, heterodimer; heterodimerizes with the protein disulfide isomerase (P4HB/PDI). Interacts with APOB. Interacts with PRAP1. Liver and small intestine. Also found in ovary, testis and kidney.

It is found in the endoplasmic reticulum. It localises to the golgi apparatus. It catalyses the reaction a 1,2-diacyl-sn-glycero-3-phosphocholine(in) = a 1,2-diacyl-sn-glycero-3-phosphocholine(out). The catalysed reaction is a 1,2-diacyl-sn-glycero-3-phosphoethanolamine(in) = a 1,2-diacyl-sn-glycero-3-phosphoethanolamine(out). It carries out the reaction a cholesterol ester(in) = a cholesterol ester(out). The enzyme catalyses a triacyl-sn-glycerol(in) = a triacyl-sn-glycerol(out). In terms of biological role, catalyzes the transport of triglyceride, cholesteryl ester, and phospholipid between phospholipid surfaces. Required for the assembly and secretion of plasma lipoproteins that contain apolipoprotein B. May be involved in regulating cholesteryl ester biosynthesis in cells that produce lipoproteins. The polypeptide is Microsomal triglyceride transfer protein large subunit (MTTP) (Homo sapiens (Human)).